Consider the following 130-residue polypeptide: Anti-adapter protein IraD (130 aa).

Belongs to the GpW/Gp25 family. IraD subfamily. In terms of assembly, interacts with RssB.

The protein resides in the cytoplasm. Functionally, inhibits RpoS proteolysis by regulating RssB activity, thereby increasing the stability of the sigma stress factor RpoS during oxidative stress. Its effect on RpoS stability is due to its interaction with RssB, which probably blocks the interaction of RssB with RpoS, and the consequent delivery of the RssB-RpoS complex to the ClpXP protein degradation pathway. The chain is Anti-adapter protein IraD from Escherichia coli O7:K1 (strain IAI39 / ExPEC).